A 94-amino-acid polypeptide reads, in one-letter code: Aspartyl/glutamyl-tRNA(Asn/Gln) amidotransferase subunit C (94 aa).

The protein belongs to the GatC family. As to quaternary structure, heterotrimer of A, B and C subunits.

The catalysed reaction is L-glutamyl-tRNA(Gln) + L-glutamine + ATP + H2O = L-glutaminyl-tRNA(Gln) + L-glutamate + ADP + phosphate + H(+). It catalyses the reaction L-aspartyl-tRNA(Asn) + L-glutamine + ATP + H2O = L-asparaginyl-tRNA(Asn) + L-glutamate + ADP + phosphate + 2 H(+). Functionally, allows the formation of correctly charged Asn-tRNA(Asn) or Gln-tRNA(Gln) through the transamidation of misacylated Asp-tRNA(Asn) or Glu-tRNA(Gln) in organisms which lack either or both of asparaginyl-tRNA or glutaminyl-tRNA synthetases. The reaction takes place in the presence of glutamine and ATP through an activated phospho-Asp-tRNA(Asn) or phospho-Glu-tRNA(Gln). The sequence is that of Aspartyl/glutamyl-tRNA(Asn/Gln) amidotransferase subunit C from Opitutus terrae (strain DSM 11246 / JCM 15787 / PB90-1).